Reading from the N-terminus, the 621-residue chain is Chaperone protein HscA homolog (621 aa).

The protein belongs to the heat shock protein 70 family.

Its function is as follows. Chaperone involved in the maturation of iron-sulfur cluster-containing proteins. Has a low intrinsic ATPase activity which is markedly stimulated by HscB. The protein is Chaperone protein HscA homolog of Acidithiobacillus ferrooxidans (strain ATCC 23270 / DSM 14882 / CIP 104768 / NCIMB 8455) (Ferrobacillus ferrooxidans (strain ATCC 23270)).